Reading from the N-terminus, the 440-residue chain is MGKNVVVIGTQWGDEGKGKIVDWLTDHAQGVIRFQGGHNAGHTLVIGQGAAQREYKLNLVPSGIVREGVRCYIGNGVVLDAGHLLEEIGGLESVGVEVRSRLMISPGCPLILGYHVSLDKAREAARTQGKKIGTTGKGIGPTYEDKVARRALRVYDLFYPERFAEKLAEVLDYHNFVLTRHLNTEAVDFQAQLDAAMKHAESLRPLVHDVSAALYDAHQAGHNLLFEGAQGTLLDVDHGTYPYVTSSNCVAGQASAGSGVGPSMLHYVLGITKAYCTRVGGGPFPSELDIETDATPGHQMSDKGREIGTVTRRKRRCGWFDAAALRRSARINGLTGLCITKLDVLDGLSELEICTGYKLDGKVVDLLPVGAEDVARCEPIYEVMPGWQETTFGVKRWDDLPANARAYLKRLEELCGVPVDIVSTGPERDETIVLRHPFGA.

GTP-binding positions include 13 to 19 (GDEGKGK) and 41 to 43 (GHT). Asp14 acts as the Proton acceptor in catalysis. Mg(2+) contacts are provided by Asp14 and Gly41. IMP-binding positions include 14-17 (DEGK), 39-42 (NAGH), Thr135, Arg149, Gln230, Thr245, and Arg313. His42 functions as the Proton donor in the catalytic mechanism. 309-315 (TVTRRKR) lines the substrate pocket. GTP-binding positions include Arg315 and 341-343 (KLD).

Belongs to the adenylosuccinate synthetase family. As to quaternary structure, homodimer. Mg(2+) serves as cofactor.

It localises to the plastid. It is found in the chloroplast. The enzyme catalyses IMP + L-aspartate + GTP = N(6)-(1,2-dicarboxyethyl)-AMP + GDP + phosphate + 2 H(+). It functions in the pathway purine metabolism; AMP biosynthesis via de novo pathway; AMP from IMP: step 1/2. Its function is as follows. Plays an important role in the de novo pathway and in the salvage pathway of purine nucleotide biosynthesis. Catalyzes the first committed step in the biosynthesis of AMP from IMP. The chain is Adenylosuccinate synthetase 1, chloroplastic from Ricinus communis (Castor bean).